A 50-amino-acid polypeptide reads, in one-letter code: Large ribosomal subunit protein bL33B (50 aa).

This sequence belongs to the bacterial ribosomal protein bL33 family.

The protein is Large ribosomal subunit protein bL33B of Streptococcus pneumoniae (strain ATCC BAA-255 / R6).